Here is a 238-residue protein sequence, read N- to C-terminus: Cysteine-rich venom protein pseudechetoxin-like (238 aa).

A signal peptide spans 1-19 (MIAFIVLLSLAAVLQQSSG). Residues 20–28 (TVDFASESS) constitute a propeptide that is removed on maturation. One can recognise an SCP domain in the interval 38-164 (VDKHNALRRS…STKYLYVCQY (127 aa)). 8 cysteine pairs are disulfide-bonded: Cys75-Cys153, Cys92-Cys165, Cys148-Cys162, Cys184-Cys191, Cys187-Cys196, Cys200-Cys233, Cys209-Cys227, and Cys218-Cys231. In terms of domain architecture, ShKT spans 200–233 (CKHEDDFSNCKALAKNSKCQTAWIKSKCPATCFC).

The protein belongs to the CRISP family. Expressed by the venom gland.

It localises to the secreted. Functionally, blocks olfactory (CNGA2) and retinal (CNGA1) CNG channel currents. Does not affect neither depolarization- nor caffeine-induced contraction of smooth muscle. This chain is Cysteine-rich venom protein pseudechetoxin-like, found in Hoplocephalus stephensii (Stephens's banded snake).